A 269-amino-acid chain; its full sequence is Energy-coupling factor transporter ATP-binding protein EcfA1 (269 aa).

Positions 8-242 constitute an ABC transporter domain; the sequence is IVFKNVSFQY…AEELTTIGLD (235 aa). 42–49 contacts ATP; sequence GHNGSGKS.

It belongs to the ABC transporter superfamily. Energy-coupling factor EcfA family. Forms a stable energy-coupling factor (ECF) transporter complex composed of 2 membrane-embedded substrate-binding proteins (S component), 2 ATP-binding proteins (A component) and 2 transmembrane proteins (T component).

Its subcellular location is the cell membrane. ATP-binding (A) component of a common energy-coupling factor (ECF) ABC-transporter complex. Unlike classic ABC transporters this ECF transporter provides the energy necessary to transport a number of different substrates. The polypeptide is Energy-coupling factor transporter ATP-binding protein EcfA1 (Staphylococcus aureus (strain MRSA252)).